Consider the following 152-residue polypeptide: Transcriptional regulator MraZ (152 aa).

SpoVT-AbrB domains are found at residues 5-52 (ASAI…PFDE) and 81-124 (AHEC…DETA).

Belongs to the MraZ family. Forms oligomers.

The protein localises to the cytoplasm. The protein resides in the nucleoid. This is Transcriptional regulator MraZ from Shewanella sediminis (strain HAW-EB3).